Reading from the N-terminus, the 550-residue chain is Carboxylesterase 4A (550 aa).

An N-terminal signal peptide occupies residues 1–20; that stretch reads MNWILCLSLTLLLVVQTAWG. A disulfide bond links Cys-88 and Cys-116. The active-site Acyl-ester intermediate is the Ser-221. An intrachain disulfide couples Cys-273 to Cys-284. A glycan (N-linked (GlcNAc...) asparagine) is linked at Asn-276. Residue Glu-353 is the Charge relay system of the active site. Asn-386 is a glycosylation site (N-linked (GlcNAc...) asparagine). His-465 acts as the Charge relay system in catalysis.

This sequence belongs to the type-B carboxylesterase/lipase family.

The protein localises to the secreted. Probable carboxylesterase. This is Carboxylesterase 4A (CES4A) from Bos taurus (Bovine).